The chain runs to 519 residues: MSIAKNIENDPSKGWVVQKFGGTSVGKFPIKIAVDVAKEYLSTKRVALVCSARSTDTKAEGTTTRLIRATEAALRPAVGSVHDLVRIIETDHVQAARDFIQDVGIQDELIDAFHADCVELEQYLNAIRVLSEVSPRTRDLVIGMGERLSCRFMAAVLKDQGIDSEFIDMSHIIDEQREWRNLDASFYAYLASQLASKVTAVGNKVPVVTGFFGMVPGGLLSQIGRGYTDFCAALLAVGLNADELQIWKEVDGIFTADPRKVPTARLLPLITPEEAAELTYYGSEVIHPFTMSQVVHARIPIRIKNVGNPRGKGTVIFPDTISRHGSATPPHPPKIMPDDISASLANKGATAVTIKDTIMVINIQSNRKISAHGFLASIFAILDKYKLAVDLITTSEVHVSMALYEESDDGNMHEAFVELRRLGTLDILHGLAILSLVGKHMRNTTGYAGRMFCKLAEAQINIEMISQGASEINISCVIDEKMAVKALNVIHKELLEPLALHEVPSQASMLVEKPWLYSA.

At Ser-326 the chain carries Phosphoserine. Position 328 is a phosphothreonine (Thr-328). One can recognise an ACT domain in the interval 436-518 (LVGKHMRNTT…MLVEKPWLYS (83 aa)).

This sequence belongs to the aspartokinase family.

The enzyme catalyses L-aspartate + ATP = 4-phospho-L-aspartate + ADP. Its pathway is amino-acid biosynthesis; L-methionine biosynthesis via de novo pathway; L-homoserine from L-aspartate: step 1/3. It functions in the pathway amino-acid biosynthesis; L-threonine biosynthesis; L-threonine from L-aspartate: step 1/5. In terms of biological role, phosphorylates aspartate, the first step in the biosynthesis of amino acids that derive from aspartate (the aspartate family of amino acids), including methioinine and threonine, the latter of which is a precursor to isoleucine. The chain is Aspartokinase from Schizosaccharomyces pombe (strain 972 / ATCC 24843) (Fission yeast).